The primary structure comprises 180 residues: Large ribosomal subunit protein eL20 (180 aa).

Belongs to the eukaryotic ribosomal protein eL20 family.

This Caenorhabditis elegans protein is Large ribosomal subunit protein eL20.